The sequence spans 501 residues: ATP synthase subunit alpha (501 aa).

Residue 169–176 (GDRQTGKT) participates in ATP binding.

The protein belongs to the ATPase alpha/beta chains family. F-type ATPases have 2 components, CF(1) - the catalytic core - and CF(0) - the membrane proton channel. CF(1) has five subunits: alpha(3), beta(3), gamma(1), delta(1), epsilon(1). CF(0) has three main subunits: a(1), b(2) and c(9-12). The alpha and beta chains form an alternating ring which encloses part of the gamma chain. CF(1) is attached to CF(0) by a central stalk formed by the gamma and epsilon chains, while a peripheral stalk is formed by the delta and b chains.

The protein localises to the cell membrane. It catalyses the reaction ATP + H2O + 4 H(+)(in) = ADP + phosphate + 5 H(+)(out). In terms of biological role, produces ATP from ADP in the presence of a proton gradient across the membrane. The alpha chain is a regulatory subunit. In Streptococcus pneumoniae serotype 19F (strain G54), this protein is ATP synthase subunit alpha.